A 153-amino-acid chain; its full sequence is SsrA-binding protein (153 aa).

The protein belongs to the SmpB family.

It localises to the cytoplasm. Functionally, required for rescue of stalled ribosomes mediated by trans-translation. Binds to transfer-messenger RNA (tmRNA), required for stable association of tmRNA with ribosomes. tmRNA and SmpB together mimic tRNA shape, replacing the anticodon stem-loop with SmpB. tmRNA is encoded by the ssrA gene; the 2 termini fold to resemble tRNA(Ala) and it encodes a 'tag peptide', a short internal open reading frame. During trans-translation Ala-aminoacylated tmRNA acts like a tRNA, entering the A-site of stalled ribosomes, displacing the stalled mRNA. The ribosome then switches to translate the ORF on the tmRNA; the nascent peptide is terminated with the 'tag peptide' encoded by the tmRNA and targeted for degradation. The ribosome is freed to recommence translation, which seems to be the essential function of trans-translation. The polypeptide is SsrA-binding protein (Desulforudis audaxviator (strain MP104C)).